An 83-amino-acid polypeptide reads, in one-letter code: Salivary thrombin inhibitor anophelin (83 aa).

The first 22 residues, 1 to 22 (MANKLVLISLLCVVLVAKITQA), serve as a signal peptide directing secretion. The disordered stretch occupies residues 25-51 (QYAPGDEPSYDEDTDDSDKLVENDTSI). Residue Asn47 is glycosylated (N-linked (GlcNAc...) asparagine). The interval 54-83 (EDYAAIEASLSETFNTAADPGRRLGEGSKP) is sufficient for host thrombin inhibition. Residues 56–62 (YAAIEAS) are blocks exosite I of host thrombin. The interval 64 to 83 (SETFNTAADPGRRLGEGSKP) is disordered. The segment at 72-75 (DPGR) is blocks active site cleft of host thrombin in a reverse direction compared to substrates. The segment covering 73-83 (PGRRLGEGSKP) has biased composition (basic and acidic residues).

This sequence belongs to the anophelin family. Interacts with human F2 (thrombin); the interaction results in thrombin inhibition. As to expression, salivary gland (at protein level).

It localises to the secreted. With respect to regulation, increasing concentration of NaCl decreases affinity for thrombin. Salivary protein with anticoagulant activity that inhibits host thrombin (F2); binds to the proteinase in a reverse orientation (opposite to substrates). Inhibits thrombin-induced platelet aggregation. This is Salivary thrombin inhibitor anophelin from Anopheles albimanus (New world malaria mosquito).